The following is a 187-amino-acid chain: Peptidyl-tRNA hydrolase (187 aa).

Tyr-14 contacts tRNA. His-19 acts as the Proton acceptor in catalysis. TRNA contacts are provided by Tyr-64 and Asn-66.

It belongs to the PTH family. Monomer.

It is found in the cytoplasm. The catalysed reaction is an N-acyl-L-alpha-aminoacyl-tRNA + H2O = an N-acyl-L-amino acid + a tRNA + H(+). Functionally, hydrolyzes ribosome-free peptidyl-tRNAs (with 1 or more amino acids incorporated), which drop off the ribosome during protein synthesis, or as a result of ribosome stalling. Catalyzes the release of premature peptidyl moieties from peptidyl-tRNA molecules trapped in stalled 50S ribosomal subunits, and thus maintains levels of free tRNAs and 50S ribosomes. The polypeptide is Peptidyl-tRNA hydrolase (Carboxydothermus hydrogenoformans (strain ATCC BAA-161 / DSM 6008 / Z-2901)).